Here is a 272-residue protein sequence, read N- to C-terminus: MLTYPNIDPVAIHLGPLQVHWYGLMYLLAFLCAWGLASYRAKQRDGWTSDMVSDLVFYGALGVVLGGRIGYVLFYEFDKFLENPIWLFQVWTGGMSFHGGFLGVMIAMLFWCKKYQKTWFQTLDFVAPCVPTGLMFGRIGNFIGGELYGRAVTDPNYPFGMIFPTDPLHLVRHPSQIYQALCEGLLLFIILWWFSSKPRPRMAVSALFLMGYGVARFVMEFFRQPDADQGFILFGWMTKGQILTVPMLLIGLWMMWYAYQKKIYDWGPQKNS.

The next 7 membrane-spanning stretches (helical) occupy residues 17-37, 55-75, 90-110, 125-145, 174-194, 202-222, and 230-250; these read LQVHWYGLMYLLAFLCAWGLA, LVFYGALGVVLGGRIGYVLFY, VWTGGMSFHGGFLGVMIAMLF, FVAPCVPTGLMFGRIGNFIGG, PSQIYQALCEGLLLFIILWWF, MAVSALFLMGYGVARFVMEFF, and GFILFGWMTKGQILTVPMLLI. Residue R138 participates in a 1,2-diacyl-sn-glycero-3-phospho-(1'-sn-glycerol) binding.

This sequence belongs to the Lgt family.

Its subcellular location is the cell inner membrane. The enzyme catalyses L-cysteinyl-[prolipoprotein] + a 1,2-diacyl-sn-glycero-3-phospho-(1'-sn-glycerol) = an S-1,2-diacyl-sn-glyceryl-L-cysteinyl-[prolipoprotein] + sn-glycerol 1-phosphate + H(+). It participates in protein modification; lipoprotein biosynthesis (diacylglyceryl transfer). Catalyzes the transfer of the diacylglyceryl group from phosphatidylglycerol to the sulfhydryl group of the N-terminal cysteine of a prolipoprotein, the first step in the formation of mature lipoproteins. The chain is Phosphatidylglycerol--prolipoprotein diacylglyceryl transferase from Acinetobacter baumannii (strain AB307-0294).